An 84-amino-acid polypeptide reads, in one-letter code: Large ribosomal subunit protein bL27 (84 aa).

Residues 1-21 form a disordered region; it reads MAHKKGASSTRNGRDSNAQRL. The segment covering 7 to 19 has biased composition (polar residues); it reads ASSTRNGRDSNAQ.

Belongs to the bacterial ribosomal protein bL27 family.

In Clavibacter sepedonicus (Clavibacter michiganensis subsp. sepedonicus), this protein is Large ribosomal subunit protein bL27.